Consider the following 211-residue polypeptide: Pyruvate dehydrogenase E1 component subunit beta, mitochondrial (211 aa).

A Phosphotyrosine modification is found at Tyr31. 5 residues coordinate K(+): Ile48, Ala96, Ile97, Asp99, and Asn101.

Heterotetramer of two PDHA1 and two PDHB subunits. The heterotetramer interacts with DLAT, and is part of the multimeric pyruvate dehydrogenase complex that contains multiple copies of pyruvate dehydrogenase (E1), dihydrolipoamide acetyltransferase (DLAT, E2) and lipoamide dehydrogenase (DLD, E3). These subunits are bound to an inner core composed of about 48 DLAT and 12 PDHX molecules. Interacts with DLAT. Requires thiamine diphosphate as cofactor.

It is found in the mitochondrion matrix. The catalysed reaction is N(6)-[(R)-lipoyl]-L-lysyl-[protein] + pyruvate + H(+) = N(6)-[(R)-S(8)-acetyldihydrolipoyl]-L-lysyl-[protein] + CO2. Its function is as follows. The pyruvate dehydrogenase complex catalyzes the overall conversion of pyruvate to acetyl-CoA and CO(2), and thereby links the glycolytic pathway to the tricarboxylic cycle. This is Pyruvate dehydrogenase E1 component subunit beta, mitochondrial from Mesocricetus auratus (Golden hamster).